Here is a 111-residue protein sequence, read N- to C-terminus: Class I hydrophobin 10 (111 aa).

An N-terminal signal peptide occupies residues Met1–Ala17. Cystine bridges form between Cys30/Cys90, Cys37/Cys84, Cys38/Cys71, and Cys91/Cys104.

The protein belongs to the fungal hydrophobin family. Self-assembles to form functional amyloid fibrils called rodlets. Self-assembly into fibrillar rodlets occurs spontaneously at hydrophobic:hydrophilic interfaces and the rodlets further associate laterally to form amphipathic monolayers.

Its subcellular location is the secreted. It is found in the cell wall. Aerial growth, conidiation, and dispersal of filamentous fungi in the environment rely upon a capability of their secreting small amphipathic proteins called hydrophobins (HPBs) with low sequence identity. Class I can self-assemble into an outermost layer of rodlet bundles on aerial cell surfaces, conferring cellular hydrophobicity that supports fungal growth, development and dispersal; whereas Class II form highly ordered films at water-air interfaces through intermolecular interactions but contribute nothing to the rodlet structure. The polypeptide is Class I hydrophobin 10 (Pleurotus ostreatus (strain PC15) (Oyster mushroom)).